Consider the following 258-residue polypeptide: MPVLAVIPARLGATRLPRKPLRLLGGEPIVVRVYQRVVQLGVADHCVVATDHPEVQEACARHGIPVVMTRADHPSGTDRVAEVAAQPEFSSFDVLLNVQGDEPFVSREALAGAVEIVTSGLAPIGTAAVPVSVDTLQRPDVVKVVCADDRRALYFSRAAIPFLRDASDAAVLAPLVRQHVGVYAYARQALQQWVSWPPHPLELIERLEQLRPLAHGLSIGVTTVAATEGGIDTEDDLVRANTHWDVLHAANSSAYRSA.

The protein belongs to the KdsB family.

Its subcellular location is the cytoplasm. The enzyme catalyses 3-deoxy-alpha-D-manno-oct-2-ulosonate + CTP = CMP-3-deoxy-beta-D-manno-octulosonate + diphosphate. The protein operates within nucleotide-sugar biosynthesis; CMP-3-deoxy-D-manno-octulosonate biosynthesis; CMP-3-deoxy-D-manno-octulosonate from 3-deoxy-D-manno-octulosonate and CTP: step 1/1. It participates in bacterial outer membrane biogenesis; lipopolysaccharide biosynthesis. Its function is as follows. Activates KDO (a required 8-carbon sugar) for incorporation into bacterial lipopolysaccharide in Gram-negative bacteria. This chain is 3-deoxy-manno-octulosonate cytidylyltransferase, found in Gemmatimonas aurantiaca (strain DSM 14586 / JCM 11422 / NBRC 100505 / T-27).